We begin with the raw amino-acid sequence, 379 residues long: RIB43A-like with coiled-coils protein 1 (379 aa).

Coiled-coil stretches lie at residues 43–111 (EALN…RCEL) and 285–337 (IRKV…EFRR).

This sequence belongs to the RIB43A family. In terms of assembly, microtubule inner protein component of sperm flagellar doublet microtubules.

It localises to the cytoplasm. Its subcellular location is the cytoskeleton. The protein resides in the flagellum axoneme. This chain is RIB43A-like with coiled-coils protein 1 (RIBC1), found in Bos taurus (Bovine).